The primary structure comprises 496 residues: MNRRLPATLRELSECFRSKSLDPLTFTEHTLHRASDRAKHLNAFVRISSQTALQQAEASTQRHRSGSTLGPLDGATIAVKDNFCTRNVATTCASRMLESFVPTYSATVWERLERGGAVLVGKTNMDQFGMGSGTVDSIFGPTRNCWSESLEGERFRIAGGSSGGSAVAVASGVCFAALGSDTGGSTRNPASYCGVVGLKPTYGLLSRHGLIPLVNSMDVPGILTRTVKDCATVLNAIAGPDERDSTTVKKPFKPVELPESICLKGLRIGIPVEYHCEGLSEEVLHTWAKVADMLEDAGATVTSVSLPYTSASIFVYSILNQCEVSSNMSRYDGIEFGLRSDEDASTEQLYARSRAEGFNGVVKNRILTGNYFLLRKNYDKFFQKALQVRRLIAEDFDKAFTKVDFLLTPTTLSSAPLYEDFVQGTNRDQCAVQDFCTQPANMGGIPAISLPIRLSEHKLPISLQLMGPNFSEQNLLTVAKWIESQVEFEHLCATND.

Active-site charge relay system residues include Lys80 and Ser161. The Acyl-ester intermediate role is filled by Ser185.

The protein belongs to the amidase family. GatA subfamily. As to quaternary structure, subunit of the heterotrimeric GatCAB amidotransferase (AdT) complex, composed of A, B and C subunits.

It is found in the mitochondrion. The enzyme catalyses L-glutamyl-tRNA(Gln) + L-glutamine + ATP + H2O = L-glutaminyl-tRNA(Gln) + L-glutamate + ADP + phosphate + H(+). In terms of biological role, allows the formation of correctly charged Gln-tRNA(Gln) through the transamidation of misacylated Glu-tRNA(Gln) in the mitochondria. The reaction takes place in the presence of glutamine and ATP through an activated gamma-phospho-Glu-tRNA(Gln). The protein is Glutamyl-tRNA(Gln) amidotransferase subunit A, mitochondrial of Culex quinquefasciatus (Southern house mosquito).